Reading from the N-terminus, the 324-residue chain is Cysteine-rich repeat secretory protein 9 (324 aa).

The signal sequence occupies residues 1 to 27; that stretch reads MARIIITLTIPLFYFFFFSLLSHQTMS. Gnk2-homologous domains are found at residues 29–132 and 138–248; these read PDHI…NVSF and IVPS…TSVL. Positions 251 to 286 are disordered; the sequence is PPPSPSAPPPRSPPPKSSPPSSLPQTPSPPLVFTPP.

The protein belongs to the cysteine-rich repeat secretory protein family.

Its subcellular location is the secreted. This Arabidopsis thaliana (Mouse-ear cress) protein is Cysteine-rich repeat secretory protein 9 (CRRSP9).